We begin with the raw amino-acid sequence, 490 residues long: MAALMVVGTSSHAGKSLLVTALGRLFHRRGVKVAPFKGQNMALNAYVTAEGHEIGHAQAVQAWACGLEPSVAMNPILLKPQGNMTSQVILKGKPAGVCGAVDYYRDYFEPGWQAVVEALAELQSQYELVICEGAGSPAEVNLRHRDLTNMRVALHLGAPTLLVTDIDRGGALAHVVGTLQVLPPEERALIKGIVINKFRGSLALLQPGLDWLAQYTGVPVVGVLPWLEMALPEEDSMGLFDRRGARKQAQLEIVVIRLPRIANFTDFDALEAEPSVRVRYVSPDGYLGHPDAIILPGSKATIPDLLALEASGMAAQIRAYGGVILGICGGLQILGSTIDDPEGFEGHPGRHPGLGLIEATTVFEPLKITRQVQVESRLPAGEPVVGYEIHQGQTTFAPTLEALFAEPHLGVVSSNRRVWGTYLHGLLDNHAWRRHWLNALRERRGLPQLPVQSGHYREQREEMFERLADAWEPHLPIDGFAQLAGFASQV.

Residues 250–432 (QLEIVVIRLP…LHGLLDNHAW (183 aa)) form the GATase cobBQ-type domain. Cysteine 328 (nucleophile) is an active-site residue. Histidine 424 is an active-site residue.

The protein belongs to the CobB/CobQ family. CobQ subfamily.

The protein operates within cofactor biosynthesis; adenosylcobalamin biosynthesis. Catalyzes amidations at positions B, D, E, and G on adenosylcobyrinic A,C-diamide. NH(2) groups are provided by glutamine, and one molecule of ATP is hydrogenolyzed for each amidation. This chain is Cobyric acid synthase, found in Gloeobacter violaceus (strain ATCC 29082 / PCC 7421).